The chain runs to 323 residues: Transaldolase (323 aa).

Lys-133 serves as the catalytic Schiff-base intermediate with substrate.

Belongs to the transaldolase family. Type 1 subfamily. As to quaternary structure, monomer.

The enzyme catalyses D-sedoheptulose 7-phosphate + D-glyceraldehyde 3-phosphate = D-erythrose 4-phosphate + beta-D-fructose 6-phosphate. The protein operates within carbohydrate degradation; pentose phosphate pathway; D-glyceraldehyde 3-phosphate and beta-D-fructose 6-phosphate from D-ribose 5-phosphate and D-xylulose 5-phosphate (non-oxidative stage): step 2/3. In terms of biological role, transaldolase important for the balance of metabolites in the pentose-phosphate pathway. Involved in xylose fermentation to ethanol. The polypeptide is Transaldolase (Fusarium oxysporum f. sp. lycopersici (strain 4287 / CBS 123668 / FGSC 9935 / NRRL 34936) (Fusarium vascular wilt of tomato)).